We begin with the raw amino-acid sequence, 328 residues long: Hairy/enhancer-of-split related with YRPW motif-like protein (328 aa).

Positions methionine 1–arginine 54 are disordered. Residues glutamine 42 to alanine 111 are transcriptional repression and interaction with NCOR1 and SIN3A. In terms of domain architecture, bHLH spans alanine 43–leucine 98. One can recognise an Orange domain in the interval phenylalanine 116–leucine 153. The interval leucine 236 to methionine 272 is disordered.

Belongs to the HEY family. As to quaternary structure, self-associates. Interacts with GATA4, GATA6, HES1, HEY1 and HEY2. Interacts with HDAC1, NCOR1 and SIN3A.

It is found in the nucleus. In terms of biological role, downstream effector of Notch signaling which may be required for cardiovascular development. Transcriptional repressor which binds preferentially to the canonical E box sequence 5'-CACGTG-3'. Represses transcription by the cardiac transcriptional activators GATA4 and GATA6. The chain is Hairy/enhancer-of-split related with YRPW motif-like protein (HEYL) from Bos taurus (Bovine).